We begin with the raw amino-acid sequence, 84 residues long: Beta-toxin Ct16 (84 aa).

The signal sequence occupies residues 1–19; the sequence is MNYFILLFVATFLLLDVNC. Residues 21–80 form the LCN-type CS-alpha/beta domain; that stretch reads KDGYPVDANNCKFECWKNEYCDELCKAKRAESGYCYKLKLSCWCEGLPDDEPTKTSDRCY. Intrachain disulfides connect cysteine 31–cysteine 79, cysteine 35–cysteine 55, cysteine 41–cysteine 62, and cysteine 45–cysteine 64. Threonine amide is present on threonine 82.

It belongs to the long (4 C-C) scorpion toxin superfamily. Sodium channel inhibitor family. Alpha subfamily. In terms of tissue distribution, expressed by the venom gland.

The protein resides in the secreted. Its function is as follows. Alpha toxins bind voltage-independently at site-3 of sodium channels (Nav) and inhibit the inactivation of the activated channels, thereby blocking neuronal transmission. Is possibly toxic to mice. In Centruroides tecomanus (Scorpion), this protein is Beta-toxin Ct16.